A 508-amino-acid polypeptide reads, in one-letter code: Light-independent protochlorophyllide reductase subunit B (508 aa).

Asp36 contributes to the [4Fe-4S] cluster binding site. The Proton donor role is filled by Asp282. Residue Gly417–Leu418 coordinates substrate.

Belongs to the ChlB/BchB/BchZ family. In terms of assembly, protochlorophyllide reductase is composed of three subunits; BchL, BchN and BchB. Forms a heterotetramer of two BchB and two BchN subunits. Requires [4Fe-4S] cluster as cofactor.

The enzyme catalyses chlorophyllide a + oxidized 2[4Fe-4S]-[ferredoxin] + 2 ADP + 2 phosphate = protochlorophyllide a + reduced 2[4Fe-4S]-[ferredoxin] + 2 ATP + 2 H2O. It functions in the pathway porphyrin-containing compound metabolism; bacteriochlorophyll biosynthesis (light-independent). In terms of biological role, component of the dark-operative protochlorophyllide reductase (DPOR) that uses Mg-ATP and reduced ferredoxin to reduce ring D of protochlorophyllide (Pchlide) to form chlorophyllide a (Chlide). This reaction is light-independent. The NB-protein (BchN-BchB) is the catalytic component of the complex. The sequence is that of Light-independent protochlorophyllide reductase subunit B from Methylocella silvestris (strain DSM 15510 / CIP 108128 / LMG 27833 / NCIMB 13906 / BL2).